The chain runs to 664 residues: Methionine--tRNA ligase (664 aa).

Residues 15-25 (YYPSGKAHIGH) carry the 'HIGH' region motif. Positions 310–314 (KMSKS) match the 'KMSKS' region motif. Position 313 (K313) interacts with ATP. Residues 563 to 664 (DFDKIDLRVA…SALPNGAKVK (102 aa)) form the tRNA-binding domain.

This sequence belongs to the class-I aminoacyl-tRNA synthetase family. MetG type 2B subfamily. As to quaternary structure, homodimer.

The protein localises to the cytoplasm. The enzyme catalyses tRNA(Met) + L-methionine + ATP = L-methionyl-tRNA(Met) + AMP + diphosphate. Is required not only for elongation of protein synthesis but also for the initiation of all mRNA translation through initiator tRNA(fMet) aminoacylation. The chain is Methionine--tRNA ligase (metG) from Listeria innocua serovar 6a (strain ATCC BAA-680 / CLIP 11262).